The following is a 356-amino-acid chain: Probable dual-specificity RNA methyltransferase RlmN (356 aa).

Residue glutamate 92 is the Proton acceptor of the active site. The Radical SAM core domain occupies 98 to 336; it reads HKYGFSVCVT…CGVRLEHGTD (239 aa). Cysteines 105 and 341 form a disulfide. The [4Fe-4S] cluster site is built by cysteine 112, cysteine 116, and cysteine 119. S-adenosyl-L-methionine contacts are provided by residues 164 to 165, serine 196, 219 to 221, and asparagine 297; these read GE and SLH. Cysteine 341 acts as the S-methylcysteine intermediate in catalysis.

The protein belongs to the radical SAM superfamily. RlmN family. Requires [4Fe-4S] cluster as cofactor.

Its subcellular location is the cytoplasm. The catalysed reaction is adenosine(2503) in 23S rRNA + 2 reduced [2Fe-2S]-[ferredoxin] + 2 S-adenosyl-L-methionine = 2-methyladenosine(2503) in 23S rRNA + 5'-deoxyadenosine + L-methionine + 2 oxidized [2Fe-2S]-[ferredoxin] + S-adenosyl-L-homocysteine. It carries out the reaction adenosine(37) in tRNA + 2 reduced [2Fe-2S]-[ferredoxin] + 2 S-adenosyl-L-methionine = 2-methyladenosine(37) in tRNA + 5'-deoxyadenosine + L-methionine + 2 oxidized [2Fe-2S]-[ferredoxin] + S-adenosyl-L-homocysteine. Its function is as follows. Specifically methylates position 2 of adenine 2503 in 23S rRNA and position 2 of adenine 37 in tRNAs. This Shouchella clausii (strain KSM-K16) (Alkalihalobacillus clausii) protein is Probable dual-specificity RNA methyltransferase RlmN.